Here is a 193-residue protein sequence, read N- to C-terminus: Xanthine phosphoribosyltransferase (193 aa).

Positions 20 and 27 each coordinate xanthine. 128–132 serves as a coordination point for 5-phospho-alpha-D-ribose 1-diphosphate; sequence ANGQA. Lys-156 serves as a coordination point for xanthine.

The protein belongs to the purine/pyrimidine phosphoribosyltransferase family. Xpt subfamily. Homodimer.

It localises to the cytoplasm. The enzyme catalyses XMP + diphosphate = xanthine + 5-phospho-alpha-D-ribose 1-diphosphate. Its pathway is purine metabolism; XMP biosynthesis via salvage pathway; XMP from xanthine: step 1/1. Functionally, converts the preformed base xanthine, a product of nucleic acid breakdown, to xanthosine 5'-monophosphate (XMP), so it can be reused for RNA or DNA synthesis. The protein is Xanthine phosphoribosyltransferase of Streptococcus pyogenes serotype M5 (strain Manfredo).